Consider the following 498-residue polypeptide: TORTIFOLIA1-like protein 5 (498 aa).

5 HEAT repeats span residues 56-93, 97-134, 136-173, 177-214, and 219-257; these read ETFS…SHGD, PHLS…NITG, PFSI…AADE, EQLQ…AVGG, and KAVL…VEEE. The segment at 296 to 423 is disordered; sequence EGDSTEVSES…SSSQAKSNAE (128 aa). Positions 300 to 322 are enriched in low complexity; it reads TEVSESSSSSKSASSGLSATSGK. Over residues 343–366 the composition is skewed to basic and acidic residues; sequence NDVEPLDRGDTPKDVEQEAVVSKE. The segment covering 390–400 has biased composition (polar residues); it reads NGSNKSQVVQS. At Ser-426 the chain carries Phosphoserine.

This chain is TORTIFOLIA1-like protein 5, found in Arabidopsis thaliana (Mouse-ear cress).